The primary structure comprises 20 residues: Protein PR-L6 (20 aa).

It belongs to the BetVI family.

The chain is Protein PR-L6 from Lupinus luteus (European yellow lupine).